A 262-amino-acid chain; its full sequence is Integral membrane protein 2B (262 aa).

Residues 1–49 (MVKVSFNSALAHKEAANKEEENSQVLILPPDAKEPEDVVVPAGHKRAWC) lie on the Cytoplasmic side of the membrane. The helical; Signal-anchor for type II membrane protein transmembrane segment at 50–70 (WCMCFGLAFMLAGVILGGAYL) threads the bilayer. At 71 to 262 (YKYFAFQQGG…FAMETLICEQ (192 aa)) the chain is on the lumenal side. In terms of domain architecture, BRICHOS spans 132–226 (FADSDPADIV…LCRGKETYKL (95 aa)). 2 disulfide bridges follow: Cys159-Cys218 and Cys243-Cys260. N-linked (GlcNAc...) asparagine glycosylation is present at Asn165.

The protein belongs to the ITM2 family. Homodimer; disulfide-linked. As to expression, expressed in areas of chondro-osteogenic transition and widely in the nervous system.

The protein localises to the golgi apparatus membrane. Its subcellular location is the cell membrane. It localises to the endosome membrane. Plays a role in the induction of neurite outgrowth. This Gallus gallus (Chicken) protein is Integral membrane protein 2B (ITM2B).